The sequence spans 457 residues: Argininosuccinate lyase (457 aa).

Belongs to the lyase 1 family. Argininosuccinate lyase subfamily.

It localises to the cytoplasm. It catalyses the reaction 2-(N(omega)-L-arginino)succinate = fumarate + L-arginine. It functions in the pathway amino-acid biosynthesis; L-arginine biosynthesis; L-arginine from L-ornithine and carbamoyl phosphate: step 3/3. The protein is Argininosuccinate lyase of Klebsiella pneumoniae subsp. pneumoniae (strain ATCC 700721 / MGH 78578).